The chain runs to 240 residues: Thiopurine S-methyltransferase (240 aa).

24–35 (WKDKWVTRHISF) provides a ligand contact to S-adenosyl-L-methionine. Position 35 (Phe-35) interacts with substrate. Lys-53 carries the post-translational modification N6-acetyllysine. S-adenosyl-L-methionine is bound by residues Leu-64, Glu-85, 129–130 (SI), and Arg-147.

This sequence belongs to the class I-like SAM-binding methyltransferase superfamily. TPMT family. Monomer.

Its subcellular location is the cytoplasm. The enzyme catalyses S-adenosyl-L-methionine + a thiopurine = S-adenosyl-L-homocysteine + a thiopurine S-methylether.. It carries out the reaction mercaptopurine + S-adenosyl-L-methionine = 6-methylthiopurine + S-adenosyl-L-homocysteine + H(+). In terms of biological role, catalyzes the S-methylation of thiopurine drugs such as 6-mercaptopurine (also called mercaptopurine, 6-MP or its brand name Purinethol) using S-adenosyl-L-methionine as the methyl donor. TPMT activity modulates the cytotoxic effects of thiopurine prodrugs. A natural substrate for this enzyme has yet to be identified. The protein is Thiopurine S-methyltransferase (Tpmt) of Mus spretus (Western Mediterranean mouse).